A 466-amino-acid chain; its full sequence is Cysteine--tRNA ligase (466 aa).

Cys27 serves as a coordination point for Zn(2+). A 'HIGH' region motif is present at residues 29-39; it reads PTVYNFFHIGN. Positions 207, 232, and 236 each coordinate Zn(2+). The 'KMSKS' region signature appears at 264–268; the sequence is KMSKS. Lys267 is a binding site for ATP.

It belongs to the class-I aminoacyl-tRNA synthetase family. In terms of assembly, monomer. The cofactor is Zn(2+).

It is found in the cytoplasm. It carries out the reaction tRNA(Cys) + L-cysteine + ATP = L-cysteinyl-tRNA(Cys) + AMP + diphosphate. The polypeptide is Cysteine--tRNA ligase (Clostridium beijerinckii (strain ATCC 51743 / NCIMB 8052) (Clostridium acetobutylicum)).